The primary structure comprises 287 residues: MPFNGYQTYYRIVGDRQSNKTPLVLLHGGPGSTHNYFEGFDDLAAQTGRPIVMYDQLGCGRSSIPDDDQLWQAAMWVAELRALRTYLDLPEIHLLGQSWGGMLAIIYGCDYRPQGIKSLILASTLSSARLWAQEQHRMIRLMSPVDQSAIATAERLQDFTGAAYLTANQHFMTQHASGPITADDPEFLRRSKRVGTTAYNVAWGPNEYNPTGTLADYEYTDRLQYLQMPTLVTSGTDDLCTPLVAKTMVDQLPHATWTLFPRSRHMAFIDENTAYMTRLRHWLAAHD.

Positions 22-271 (PLVLLHGGPG…RSRHMAFIDE (250 aa)) constitute an AB hydrolase-1 domain. Catalysis depends on Ser98, which acts as the Nucleophile. The active site involves Asp238. His265 acts as the Proton donor in catalysis.

The protein belongs to the peptidase S33 family.

The protein localises to the cell envelope. It catalyses the reaction Release of N-terminal proline from a peptide.. In terms of biological role, releases the N-terminal proline from various substrates. This is Proline iminopeptidase from Lactiplantibacillus plantarum (strain ATCC BAA-793 / NCIMB 8826 / WCFS1) (Lactobacillus plantarum).